Here is a 758-residue protein sequence, read N- to C-terminus: 5-methyltetrahydropteroyltriglutamate--homocysteine methyltransferase (758 aa).

Residues 17–20 (RELK) and Lys117 contribute to the 5-methyltetrahydropteroyltri-L-glutamate site. L-homocysteine-binding positions include 434-436 (IGS) and Glu487. Residues 434–436 (IGS) and Glu487 contribute to the L-methionine site. Residues 518-519 (RC) and Trp564 each bind 5-methyltetrahydropteroyltri-L-glutamate. Asp602 provides a ligand contact to L-homocysteine. Asp602 contacts L-methionine. Glu608 contacts 5-methyltetrahydropteroyltri-L-glutamate. Positions 644, 646, and 668 each coordinate Zn(2+). His697 functions as the Proton donor in the catalytic mechanism. Residue Cys729 coordinates Zn(2+).

This sequence belongs to the vitamin-B12 independent methionine synthase family. It depends on Zn(2+) as a cofactor.

The enzyme catalyses 5-methyltetrahydropteroyltri-L-glutamate + L-homocysteine = tetrahydropteroyltri-L-glutamate + L-methionine. It participates in amino-acid biosynthesis; L-methionine biosynthesis via de novo pathway; L-methionine from L-homocysteine (MetE route): step 1/1. Its function is as follows. Catalyzes the transfer of a methyl group from 5-methyltetrahydrofolate to homocysteine resulting in methionine formation. The polypeptide is 5-methyltetrahydropteroyltriglutamate--homocysteine methyltransferase (Serratia proteamaculans (strain 568)).